We begin with the raw amino-acid sequence, 99 residues long: Integration host factor subunit alpha (99 aa).

It belongs to the bacterial histone-like protein family. Heterodimer of an alpha and a beta chain.

In terms of biological role, this protein is one of the two subunits of integration host factor, a specific DNA-binding protein that functions in genetic recombination as well as in transcriptional and translational control. This chain is Integration host factor subunit alpha (ihfA), found in Mannheimia haemolytica (Pasteurella haemolytica).